We begin with the raw amino-acid sequence, 525 residues long: Penton protein (525 aa).

Residues 1–47 are disordered; that stretch reads MWGLQPPTSIPPPPPPTELTPSTYPAMVNGYPPPAASAQSCSSSGGQ. The segment covering 8–18 has biased composition (pro residues); it reads TSIPPPPPPTE. The span at 36-47 shows a compositional bias: low complexity; it reads ASAQSCSSSGGQ.

The protein belongs to the adenoviridae penton family. In terms of assembly, interacts with the fiber protein (via N-terminal tail region). Interacts with the capsid vertex protein; this interaction binds the penton base to neighboring peripentonal hexons.

The protein resides in the virion. It is found in the host nucleus. Major capsid protein that self-associates to form penton base pentamers, each in the shape of a pentagon, situated at the 12 vertices of the pseudo T=25 capsid. Involved in virus secondary attachment to host cell after initial attachment by the fiber protein, and in endocytosis of virions. As the virus enters the host cell, penton proteins are shed concomitant with virion acidification in the endosome. The sequence is that of Penton protein from Galliformes (FAdV-10).